Reading from the N-terminus, the 512-residue chain is ATP synthase subunit alpha (512 aa).

169 to 176 (GDRKTGKT) is a binding site for ATP.

This sequence belongs to the ATPase alpha/beta chains family. As to quaternary structure, F-type ATPases have 2 components, CF(1) - the catalytic core - and CF(0) - the membrane proton channel. CF(1) has five subunits: alpha(3), beta(3), gamma(1), delta(1), epsilon(1). CF(0) has three main subunits: a(1), b(2) and c(9-12). The alpha and beta chains form an alternating ring which encloses part of the gamma chain. CF(1) is attached to CF(0) by a central stalk formed by the gamma and epsilon chains, while a peripheral stalk is formed by the delta and b chains.

The protein resides in the cell membrane. The enzyme catalyses ATP + H2O + 4 H(+)(in) = ADP + phosphate + 5 H(+)(out). Functionally, produces ATP from ADP in the presence of a proton gradient across the membrane. The alpha chain is a regulatory subunit. The sequence is that of ATP synthase subunit alpha from Limosilactobacillus fermentum (strain NBRC 3956 / LMG 18251) (Lactobacillus fermentum).